A 38-amino-acid chain; its full sequence is Defensin-1 (38 aa).

Disulfide bonds link cysteine 4–cysteine 25, cysteine 11–cysteine 33, and cysteine 15–cysteine 35.

The protein resides in the secreted. Functionally, has antibacterial activity against the Gram-positive bacteria L.lactis and S.aureus, and against the Gram-negative bacteria E.coli D32 and V.parahemolyticus. This Crassostrea virginica (Eastern oyster) protein is Defensin-1.